A 147-amino-acid chain; its full sequence is Large ribosomal subunit protein uL13 (147 aa).

Positions 127–147 (GPEHPHSAQQPKVLEIQGAAR) are disordered.

This sequence belongs to the universal ribosomal protein uL13 family. As to quaternary structure, part of the 50S ribosomal subunit.

This protein is one of the early assembly proteins of the 50S ribosomal subunit, although it is not seen to bind rRNA by itself. It is important during the early stages of 50S assembly. This Verminephrobacter eiseniae (strain EF01-2) protein is Large ribosomal subunit protein uL13.